The following is a 179-amino-acid chain: Large ribosomal subunit protein uL5c (179 aa).

The protein belongs to the universal ribosomal protein uL5 family. In terms of assembly, part of the 50S ribosomal subunit; contacts the 5S rRNA.

It is found in the plastid. Its subcellular location is the chloroplast. Its function is as follows. Binds 5S rRNA, forms part of the central protuberance of the 50S subunit. This Euglena gracilis protein is Large ribosomal subunit protein uL5c (rpl5).